A 168-amino-acid polypeptide reads, in one-letter code: MPTLLLGASIPFGTIAYTLFIFLLLLVMLRKFAWGPLMGIMKEREEHVANEIDAAERNNAEAKKLVEEQREMLKQSRVEAQELIERAKKQAVDQKDVIVAAAKEEAESIKASAVQEIQREKEQAIAALQEQVASLSVQIASKVIEKELKEEDQVKLIRDYIKEVGEAR.

The helical transmembrane segment at S9–L29 threads the bilayer.

This sequence belongs to the ATPase B chain family. F-type ATPases have 2 components, F(1) - the catalytic core - and F(0) - the membrane proton channel. F(1) has five subunits: alpha(3), beta(3), gamma(1), delta(1), epsilon(1). F(0) has three main subunits: a(1), b(2) and c(10-14). The alpha and beta chains form an alternating ring which encloses part of the gamma chain. F(1) is attached to F(0) by a central stalk formed by the gamma and epsilon chains, while a peripheral stalk is formed by the delta and b chains.

The protein localises to the cell membrane. In terms of biological role, f(1)F(0) ATP synthase produces ATP from ADP in the presence of a proton or sodium gradient. F-type ATPases consist of two structural domains, F(1) containing the extramembraneous catalytic core and F(0) containing the membrane proton channel, linked together by a central stalk and a peripheral stalk. During catalysis, ATP synthesis in the catalytic domain of F(1) is coupled via a rotary mechanism of the central stalk subunits to proton translocation. Component of the F(0) channel, it forms part of the peripheral stalk, linking F(1) to F(0). This chain is ATP synthase subunit b, found in Bacillus cereus (strain B4264).